A 325-amino-acid chain; its full sequence is RNA ligase 1 (325 aa).

It depends on Mg(2+) as a cofactor. Mn(2+) is required as a cofactor. Post-translationally, AMPylates itself (auto-AMPylation).

The enzyme catalyses ATP + (ribonucleotide)n-3'-hydroxyl + 5'-phospho-(ribonucleotide)m = (ribonucleotide)n+m + AMP + diphosphate.. Functionally, functions as an RNA ligase, in vitro. The ligation reaction entails three nucleotidyl transfer steps. In the first step, the RNA ligase reacts with ATP in the absence of nucleic acid to form a covalent ligase-AMP intermediate and release pyrophosphate. In step 2, the ligase-AMP binds to the nucleic acid and transfers the adenylate to the 5'-PO4 terminus to form an adenylylated intermediate. In step 3, the RNA ligase directs the attack of the 3'-OH on the 5'-phosphoanhydride linkage, resulting in a repaired 3'-5' phosphodiester and release of AMP. Exhibits selectivity for single-stranded RNA substrates and may not have nick-sealing activity on double-stranded DNA-RNA hybrids. May play a role in maintaining RNA integrity under stress conditions, for example in response to reactive oxygen species (ROS). In Pongo abelii (Sumatran orangutan), this protein is RNA ligase 1.